The sequence spans 328 residues: MANGDSPDQNENHCSAINSSILLTPGSLPTLTLSGKIRVTVTFFLFLLSTIFNTSFLLKLQNWTQRKEKRKKLSKMKVLLKHLTLANLLETLIVMPLDGMWNITVQWYAGELLCKVLSYLKLFSMYAPAFMMVVISLDRSLAITRPLAVKSNSKLGQFMIGLAWLLSSIFAGPQLYIFGMIHLADDSGQTEGFSQCVTHCSFPQWWHQAFYNFFTFSCLFIIPLLIMLICNAKIIFTLTRVLHQDPHKLQLNQSKNNIPQARLRTLKMTVAFATSFTVCWTPYYVLGIWYWFDPDMVNRVSDPVNHFFFLFAFLNPCFDPLIYGYFSL.

The Extracellular segment spans residues 1–38; that stretch reads MANGDSPDQNENHCSAINSSILLTPGSLPTLTLSGKIR. The N-linked (GlcNAc...) asparagine glycan is linked to asparagine 18. Residues 39–58 form a helical membrane-spanning segment; sequence VTVTFFLFLLSTIFNTSFLL. Over 59 to 77 the chain is Cytoplasmic; that stretch reads KLQNWTQRKEKRKKLSKMK. Residues 78 to 97 form a helical membrane-spanning segment; it reads VLLKHLTLANLLETLIVMPL. At 98–115 the chain is on the extracellular side; the sequence is DGMWNITVQWYAGELLCK. N-linked (GlcNAc...) asparagine glycosylation is present at asparagine 102. Cysteine 114 and cysteine 196 are joined by a disulfide. Residues 116 to 137 traverse the membrane as a helical segment; it reads VLSYLKLFSMYAPAFMMVVISL. Residues 138–164 lie on the Cytoplasmic side of the membrane; the sequence is DRSLAITRPLAVKSNSKLGQFMIGLAW. A helical membrane pass occupies residues 165–184; the sequence is LLSSIFAGPQLYIFGMIHLA. Residues 185–212 are Extracellular-facing; it reads DDSGQTEGFSQCVTHCSFPQWWHQAFYN. Residues 213–232 form a helical membrane-spanning segment; the sequence is FFTFSCLFIIPLLIMLICNA. Over 233–281 the chain is Cytoplasmic; it reads KIIFTLTRVLHQDPHKLQLNQSKNNIPQARLRTLKMTVAFATSFTVCWT. The helical transmembrane segment at 282–300 threads the bilayer; the sequence is PYYVLGIWYWFDPDMVNRV. At 301–306 the chain is on the extracellular side; sequence SDPVNH. A helical transmembrane segment spans residues 307 to 326; that stretch reads FFFLFAFLNPCFDPLIYGYF. At 327-328 the chain is on the cytoplasmic side; sequence SL.

The protein belongs to the G-protein coupled receptor 1 family.

The protein resides in the cell membrane. Functionally, receptor for gonadotropin releasing hormone (GnRH) that mediates the action of GnRH to stimulate the secretion of the gonadotropic hormones luteinizing hormone (LH) and follicle-stimulating hormone (FSH). This receptor mediates its action by association with G-proteins that activate a phosphatidylinositol-calcium second messenger system. This chain is Gonadotropin-releasing hormone receptor (GNRHR), found in Ovis aries (Sheep).